The following is a 1212-amino-acid chain: Probable serine/threonine-protein kinase DDB_G0284491 (1212 aa).

The chain crosses the membrane as a helical span at residues L197–I217. 14 N-linked (GlcNAc...) asparagine glycosylation sites follow: N229, N299, N309, N328, N335, N341, N344, N391, N419, N422, N426, N427, N435, and N499. Residues L288–D329 form a disordered region. Disordered regions lie at residues G412–G439 and I489–E517. Residues I489 to N507 are compositionally biased toward low complexity. The span at N508–E517 shows a compositional bias: acidic residues. Residues I673 to L693 form a helical membrane-spanning segment. Residues V703 to V720 are compositionally biased toward pro residues. Disordered stretches follow at residues V703–G733 and E751–N813. Residues E865–Y1182 form the Protein kinase domain. ATP is bound by residues F871–I879 and K924. D1035 acts as the Proton acceptor in catalysis.

Belongs to the protein kinase superfamily. Ser/Thr protein kinase family.

It is found in the membrane. It carries out the reaction L-seryl-[protein] + ATP = O-phospho-L-seryl-[protein] + ADP + H(+). The catalysed reaction is L-threonyl-[protein] + ATP = O-phospho-L-threonyl-[protein] + ADP + H(+). The protein is Probable serine/threonine-protein kinase DDB_G0284491 of Dictyostelium discoideum (Social amoeba).